The sequence spans 669 residues: DNA ligase (669 aa).

35 to 39 (DFEYD) provides a ligand contact to NAD(+). The segment at 52–71 (YPEWDSPDSPTHRVGSDKTE) is disordered. Over residues 61 to 71 (PTHRVGSDKTE) the composition is skewed to basic and acidic residues. NAD(+) is bound by residues 84 to 85 (SL) and Glu115. Lys117 (N6-AMP-lysine intermediate) is an active-site residue. NAD(+)-binding residues include Arg138, Glu175, Lys290, and Lys314. The Zn(2+) site is built by Cys408, Cys411, Cys426, and Cys432. One can recognise a BRCT domain in the interval 590–669 (PVSARLAGKT…EEEFLRLIEE (80 aa)).

The protein belongs to the NAD-dependent DNA ligase family. LigA subfamily. Requires Mg(2+) as cofactor. Mn(2+) serves as cofactor.

The enzyme catalyses NAD(+) + (deoxyribonucleotide)n-3'-hydroxyl + 5'-phospho-(deoxyribonucleotide)m = (deoxyribonucleotide)n+m + AMP + beta-nicotinamide D-nucleotide.. Functionally, DNA ligase that catalyzes the formation of phosphodiester linkages between 5'-phosphoryl and 3'-hydroxyl groups in double-stranded DNA using NAD as a coenzyme and as the energy source for the reaction. It is essential for DNA replication and repair of damaged DNA. In Porphyromonas gingivalis (strain ATCC 33277 / DSM 20709 / CIP 103683 / JCM 12257 / NCTC 11834 / 2561), this protein is DNA ligase.